Reading from the N-terminus, the 834-residue chain is Meiotic sister-chromatid recombination protein 3 (834 aa).

Disordered regions lie at residues 75–136 (PAAA…QPRT), 251–291 (EETE…TGSL), 343–378 (RKLA…KQPL), and 458–479 (VRRS…KKLT). Positions 343–368 (RKLAQPQQGQNQRRTVSFTQGSIDHM) are enriched in polar residues.

It is found in the cell membrane. Its function is as follows. May be involved in the control of meiotic sister-chromatid recombination. This chain is Meiotic sister-chromatid recombination protein 3 (MSC3), found in Candida glabrata (strain ATCC 2001 / BCRC 20586 / JCM 3761 / NBRC 0622 / NRRL Y-65 / CBS 138) (Yeast).